The sequence spans 228 residues: ATP-dependent dethiobiotin synthetase BioD (228 aa).

13-18 (DVGKTV) contacts ATP. Threonine 17 contacts Mg(2+). Lysine 38 is an active-site residue. Residues aspartate 55, 116–119 (EGAG), 176–177 (NR), and 205–207 (PYI) contribute to the ATP site. Mg(2+) is bound by residues aspartate 55 and glutamate 116.

This sequence belongs to the dethiobiotin synthetase family. In terms of assembly, homodimer. Requires Mg(2+) as cofactor.

Its subcellular location is the cytoplasm. It carries out the reaction (7R,8S)-7,8-diammoniononanoate + CO2 + ATP = (4R,5S)-dethiobiotin + ADP + phosphate + 3 H(+). It functions in the pathway cofactor biosynthesis; biotin biosynthesis; biotin from 7,8-diaminononanoate: step 1/2. In terms of biological role, catalyzes a mechanistically unusual reaction, the ATP-dependent insertion of CO2 between the N7 and N8 nitrogen atoms of 7,8-diaminopelargonic acid (DAPA, also called 7,8-diammoniononanoate) to form a ureido ring. This is ATP-dependent dethiobiotin synthetase BioD from Vibrio parahaemolyticus serotype O3:K6 (strain RIMD 2210633).